We begin with the raw amino-acid sequence, 121 residues long: Large ribosomal subunit protein bL12 (121 aa).

This sequence belongs to the bacterial ribosomal protein bL12 family. As to quaternary structure, homodimer. Part of the ribosomal stalk of the 50S ribosomal subunit. Forms a multimeric L10(L12)X complex, where L10 forms an elongated spine to which 2 to 4 L12 dimers bind in a sequential fashion. Binds GTP-bound translation factors.

Its function is as follows. Forms part of the ribosomal stalk which helps the ribosome interact with GTP-bound translation factors. Is thus essential for accurate translation. The chain is Large ribosomal subunit protein bL12 from Leuconostoc citreum (strain KM20).